Here is a 166-residue protein sequence, read N- to C-terminus: Deoxyuridine 5'-triphosphate nucleotidohydrolase (166 aa).

Positions 1–24 (MACVNEPSPKLQKLDRNGIHGDSS) are disordered. Residue E138 coordinates Mg(2+).

The protein belongs to the dUTPase family. In terms of assembly, homotrimer. Requires Mg(2+) as cofactor.

The enzyme catalyses dUTP + H2O = dUMP + diphosphate + H(+). The protein operates within pyrimidine metabolism; dUMP biosynthesis; dUMP from dCTP (dUTP route): step 2/2. Functionally, this enzyme is involved in nucleotide metabolism: it produces dUMP, the immediate precursor of thymidine nucleotides and it decreases the intracellular concentration of dUTP, preventing uracil incorporation into DNA. The protein is Deoxyuridine 5'-triphosphate nucleotidohydrolase (DUT) of Arabidopsis thaliana (Mouse-ear cress).